The primary structure comprises 121 residues: Small ribosomal subunit protein uS13 (121 aa).

Residues 92–121 are disordered; the sequence is KRGLPVRGQRTRTNARTRKGPRRAAASLKK.

The protein belongs to the universal ribosomal protein uS13 family. In terms of assembly, part of the 30S ribosomal subunit. Forms a loose heterodimer with protein S19. Forms two bridges to the 50S subunit in the 70S ribosome.

In terms of biological role, located at the top of the head of the 30S subunit, it contacts several helices of the 16S rRNA. In the 70S ribosome it contacts the 23S rRNA (bridge B1a) and protein L5 of the 50S subunit (bridge B1b), connecting the 2 subunits; these bridges are implicated in subunit movement. Contacts the tRNAs in the A and P-sites. The sequence is that of Small ribosomal subunit protein uS13 from Bordetella bronchiseptica (strain ATCC BAA-588 / NCTC 13252 / RB50) (Alcaligenes bronchisepticus).